Consider the following 854-residue polypeptide: Espin (854 aa).

9 ANK repeats span residues 1 to 31, 35 to 64, 69 to 99, 103 to 133, 137 to 167, 171 to 201, 205 to 235, 239 to 268, and 271 to 300; these read MALEQALQAARQGELDVLRSLHAAGLLGPSL, LDALPVHHAARAGKLHCLRFLVEEAALPAA, NGATPAHDASATGHLACLQWLLSQGGCRVQD, SGATVLHLAARFGHPEVVNWLLHHGGGDPTA, MGALPIHYAAAKGDFPSLRLLVEHYPEGVNA, NGATPLYLACQEGHLEVTQYLVQECGADPHA, DGMTPLHAAAQMGHSPVIVWLVSCTDVSLSE, DGATAMHFAASRGHTKVLSWLLLHGGEISA, and WGGTPLHDAAENGELECCQILVVNGAELDV. Phosphoserine occurs at positions 338 and 342. The span at 338–349 shows a compositional bias: basic and acidic residues; sequence SRDPSAELEAKQ. Disordered regions lie at residues 338 to 400, 415 to 474, 487 to 713, 765 to 788, and 800 to 832; these read SRDP…CGLS, NPEL…MQTK, KELS…AGFQ, KMQEEEEQRRKEEEEEARLASMPA, and EEREQKRKEEERQKQEELRREKEQSEKLRTLGY. A compositionally biased stretch (polar residues) spans 352 to 377; that stretch reads SGMSSPNTTVSVQPLNFDLSSPTSTL. Low complexity predominate over residues 378–389; the sequence is SNYDSCSSSHSS. A compositionally biased stretch (pro residues) spans 428–463; that stretch reads PTPPPPPPSFPPPPPPPGTQLPPPPPGYPAPKPPVG. Residues 487–505 are compositionally biased toward basic and acidic residues; the sequence is KELSSCDGHDGLRRQDSSR. S515 is modified (phosphoserine). Pro residues predominate over residues 595–620; it reads LPPPPPPPPPPLPEAASSPPPAPPLP. Residues 633–642 show a composition bias toward low complexity; that stretch reads SSSSTGSTKS. Composition is skewed to polar residues over residues 643–652 and 667–678; these read FNMMSPTGDN and PTPQSKGLTTVF. S647 is subject to Phosphoserine. Residues 651 to 668 enclose the WH2 domain; that stretch reads DNSELLAEIKAGKSLKPT. Phosphoserine occurs at positions 690 and 696. The segment covering 692 to 703 has biased composition (low complexity); sequence LPSVSPALSPVR. Residues 756–830 are a coiled coil; it reads QVMVRKMQLK…KEQSEKLRTL (75 aa).

As to quaternary structure, monomer. Binds F-actin in a Ca(2+)-resistant fashion. Interacts (via N-terminus) with BAIAP2 (via SH3-domain). Interacts with PFN2. Interacts with MYO3A (via C-terminus). Interacts with MYO3B (via C-terminus).

The protein resides in the cytoplasm. Its subcellular location is the cytoskeleton. It is found in the cell projection. The protein localises to the stereocilium. It localises to the microvillus. In terms of biological role, multifunctional actin-bundling protein. Plays a major role in regulating the organization, dimension, dynamics and signaling capacities of the actin filament-rich microvilli in the mechanosensory and chemosensory cells. Required for the assembly and stabilization of the stereociliary parallel actin bundles. Plays a crucial role in the formation and maintenance of inner ear hair cell stereocilia. Involved in the elongation of actin in stereocilia. In extrastriolar hair cells, required for targeting MYO3B to stereocilia tips, and for regulation of stereocilia diameter and staircase formation. The protein is Espin (ESPN) of Homo sapiens (Human).